Here is a 113-residue protein sequence, read N- to C-terminus: U11-theraphotoxin-Hhn1a (113 aa).

Residues 1 to 21 (MNTVRVTFLLVFVLPVSLGQA) form the signal peptide. Residues 22 to 74 (DKDENRMEMQEKTEQGKSYLDFAENLLLQKLEELEAKLLEEDSEESRNSRQKR) constitute a propeptide that is removed on maturation. A compositionally biased stretch (basic and acidic residues) spans 60–69 (LEEDSEESRN). A disordered region spans residues 60 to 83 (LEEDSEESRNSRQKRCIGEGVPCD). 3 cysteine pairs are disulfide-bonded: C75/C90, C82/C95, and C89/C110.

This sequence belongs to the neurotoxin 14 (magi-1) family. 01 (HNTX-16) subfamily. In terms of tissue distribution, expressed by the venom gland.

The protein resides in the secreted. Functionally, probable ion channel inhibitor. The protein is U11-theraphotoxin-Hhn1a of Cyriopagopus hainanus (Chinese bird spider).